The chain runs to 143 residues: S-protein homolog 11 (143 aa).

The N-terminal stretch at 1 to 20 (MNCFSFSFIIIVLCAGSSNA) is a signal peptide.

It belongs to the plant self-incompatibility (S1) protein family.

It is found in the secreted. This Arabidopsis thaliana (Mouse-ear cress) protein is S-protein homolog 11.